The chain runs to 317 residues: Annexin A13 (317 aa).

G2 carries N-myristoyl glycine lipidation. Annexin repeat units follow at residues 15-86, 87-158, 170-242, and 246-317; these read FDAD…ALLD, RPNE…SLLQ, ELAG…TIVR, and DLEG…ALLH.

Belongs to the annexin family. Monomer and homodimer. In terms of tissue distribution, detected on the tips of microvilli in small intestine (at protein level).

Its subcellular location is the apical cell membrane. The protein localises to the cell membrane. It localises to the cytoplasmic vesicle. Binds to membranes enriched in phosphatidylserine or phosphatidylglycerol in a calcium-dependent manner. Half-maximal membrane binding requires about 60 uM calcium. Does not bind to membranes that lack phospholipids with an acidic headgroup. The sequence is that of Annexin A13 (Anxa13) from Mus musculus (Mouse).